Here is a 504-residue protein sequence, read N- to C-terminus: ATP synthase subunit alpha, chloroplastic (504 aa).

Residue 170–177 (GDRQTGKT) coordinates ATP.

It belongs to the ATPase alpha/beta chains family. F-type ATPases have 2 components, CF(1) - the catalytic core - and CF(0) - the membrane proton channel. CF(1) has five subunits: alpha(3), beta(3), gamma(1), delta(1), epsilon(1). CF(0) has four main subunits: a, b, b' and c.

It is found in the plastid. It localises to the chloroplast thylakoid membrane. It catalyses the reaction ATP + H2O + 4 H(+)(in) = ADP + phosphate + 5 H(+)(out). Its function is as follows. Produces ATP from ADP in the presence of a proton gradient across the membrane. The alpha chain is a regulatory subunit. The sequence is that of ATP synthase subunit alpha, chloroplastic from Porphyra purpurea (Red seaweed).